Here is a 109-residue protein sequence, read N- to C-terminus: Large ribosomal subunit protein uL23 (109 aa).

It belongs to the universal ribosomal protein uL23 family. Part of the 50S ribosomal subunit. Contacts protein L29, and trigger factor when it is bound to the ribosome.

Functionally, one of the early assembly proteins it binds 23S rRNA. One of the proteins that surrounds the polypeptide exit tunnel on the outside of the ribosome. Forms the main docking site for trigger factor binding to the ribosome. This is Large ribosomal subunit protein uL23 from Aquifex pyrophilus.